Consider the following 1045-residue polypeptide: Desmoglein-1 (1045 aa).

The first 23 residues, 1 to 23 (MNWPFFRTAAVLFIFLVVLEVNS), serve as a signal peptide directing secretion. Positions 24–49 (EFRIQVRDYNTKNGTIKWHSIRRQKR) are excised as a propeptide. Residues asparagine 36, asparagine 110, and asparagine 180 are each glycosylated (N-linked (GlcNAc...) asparagine). 4 Cadherin domains span residues 50–158 (EWIK…PVFS), 159–270 (MSTF…PYME), 271–385 (LPSN…GSVF), and 386–496 (RPGS…TDGA). The Extracellular segment spans residues 50–546 (EWIKFAAACR…HPLDNVHFGP (497 aa)). A helical membrane pass occupies residues 547-567 (AGIGLLIMGFLVLGLVPFLLM). Residues 568-1045 (YCDCGGAPGG…TKYSTVQYTK (478 aa)) are Cytoplasmic-facing. Desmoglein repeat repeat units follow at residues 814 to 840 (TYPSGPGVHHPMPIPDPLSYGNVTMTE), 841 to 870 (SYTTSGILKPSVHVHDNRQASNVVVTERVV), 871 to 900 (GPISGANLHGMLEMPDLRDGSNVIVTERVI), 901 to 928 (APNSSLPTTLTIPDPRESSNVVVTERVI), and 929 to 957 (RPTSGIVGNLSMHPDISNTHNVIVTERVV). The segment at 1019-1045 (FSNTLGSASPTTTRSRITKYSTVQYTK) is disordered. A compositionally biased stretch (polar residues) spans 1020–1045 (SNTLGSASPTTTRSRITKYSTVQYTK).

In terms of assembly, binds to JUP/plakoglobin. Interacts with PKP2. Interacts with DSC3; there is evidence to suggest that the interaction promotes cell-cell adhesion of keratinocytes.

Its subcellular location is the cell membrane. The protein resides in the cell junction. It is found in the desmosome. The protein localises to the cytoplasm. It localises to the nucleus. Its function is as follows. Component of intercellular desmosome junctions. Involved in the interaction of plaque proteins and intermediate filaments mediating cell-cell adhesion. The chain is Desmoglein-1 (DSG1) from Sus scrofa (Pig).